Here is a 78-residue protein sequence, read N- to C-terminus: Sec-independent protein translocase protein TatA (78 aa).

Residues 1 to 21 (MGGISIWQLLIIAVIVVLLFG) traverse the membrane as a helical segment. Residues 47–59 (ESEKKDADFEPKS) are compositionally biased toward basic and acidic residues. The disordered stretch occupies residues 47–78 (ESEKKDADFEPKSLEQQNKQAATESKKDKEQA). Residues 60–69 (LEQQNKQAAT) show a composition bias toward polar residues.

Belongs to the TatA/E family. As to quaternary structure, the Tat system comprises two distinct complexes: a TatABC complex, containing multiple copies of TatA, TatB and TatC subunits, and a separate TatA complex, containing only TatA subunits. Substrates initially bind to the TatABC complex, which probably triggers association of the separate TatA complex to form the active translocon.

Its subcellular location is the cell inner membrane. In terms of biological role, part of the twin-arginine translocation (Tat) system that transports large folded proteins containing a characteristic twin-arginine motif in their signal peptide across membranes. TatA could form the protein-conducting channel of the Tat system. This is Sec-independent protein translocase protein TatA from Vibrio vulnificus (strain YJ016).